Consider the following 172-residue polypeptide: Crossover junction endodeoxyribonuclease RuvC (172 aa).

Residues D12, E71, and D143 contribute to the active site. 3 residues coordinate Mg(2+): D12, E71, and D143.

Belongs to the RuvC family. As to quaternary structure, homodimer which binds Holliday junction (HJ) DNA. The HJ becomes 2-fold symmetrical on binding to RuvC with unstacked arms; it has a different conformation from HJ DNA in complex with RuvA. In the full resolvosome a probable DNA-RuvA(4)-RuvB(12)-RuvC(2) complex forms which resolves the HJ. It depends on Mg(2+) as a cofactor.

It localises to the cytoplasm. It carries out the reaction Endonucleolytic cleavage at a junction such as a reciprocal single-stranded crossover between two homologous DNA duplexes (Holliday junction).. In terms of biological role, the RuvA-RuvB-RuvC complex processes Holliday junction (HJ) DNA during genetic recombination and DNA repair. Endonuclease that resolves HJ intermediates. Cleaves cruciform DNA by making single-stranded nicks across the HJ at symmetrical positions within the homologous arms, yielding a 5'-phosphate and a 3'-hydroxyl group; requires a central core of homology in the junction. The consensus cleavage sequence is 5'-(A/T)TT(C/G)-3'. Cleavage occurs on the 3'-side of the TT dinucleotide at the point of strand exchange. HJ branch migration catalyzed by RuvA-RuvB allows RuvC to scan DNA until it finds its consensus sequence, where it cleaves and resolves the cruciform DNA. This chain is Crossover junction endodeoxyribonuclease RuvC, found in Coxiella burnetii (strain CbuG_Q212) (Coxiella burnetii (strain Q212)).